Here is a 129-residue protein sequence, read N- to C-terminus: Glycine cleavage system H protein (129 aa).

The region spanning 24-106 is the Lipoyl-binding domain; the sequence is TYTVGITEHA…YTDGWIFKIR (83 aa). N6-lipoyllysine is present on K65.

The protein belongs to the GcvH family. The glycine cleavage system is composed of four proteins: P, T, L and H. (R)-lipoate is required as a cofactor.

Functionally, the glycine cleavage system catalyzes the degradation of glycine. The H protein shuttles the methylamine group of glycine from the P protein to the T protein. In Enterobacter sp. (strain 638), this protein is Glycine cleavage system H protein.